The chain runs to 89 residues: Small ribosomal subunit protein uS15 (89 aa).

The protein belongs to the universal ribosomal protein uS15 family. As to quaternary structure, part of the 30S ribosomal subunit. Forms a bridge to the 50S subunit in the 70S ribosome, contacting the 23S rRNA.

Its function is as follows. One of the primary rRNA binding proteins, it binds directly to 16S rRNA where it helps nucleate assembly of the platform of the 30S subunit by binding and bridging several RNA helices of the 16S rRNA. In terms of biological role, forms an intersubunit bridge (bridge B4) with the 23S rRNA of the 50S subunit in the ribosome. The protein is Small ribosomal subunit protein uS15 of Ectopseudomonas mendocina (strain ymp) (Pseudomonas mendocina).